Consider the following 75-residue polypeptide: Small ribosomal subunit protein bS18 (75 aa).

It belongs to the bacterial ribosomal protein bS18 family. Part of the 30S ribosomal subunit. Forms a tight heterodimer with protein bS6.

Functionally, binds as a heterodimer with protein bS6 to the central domain of the 16S rRNA, where it helps stabilize the platform of the 30S subunit. The chain is Small ribosomal subunit protein bS18 from Vibrio atlanticus (strain LGP32) (Vibrio splendidus (strain Mel32)).